A 124-amino-acid chain; its full sequence is Small ribosomal subunit protein uS12 (124 aa).

3-methylthioaspartic acid is present on aspartate 89.

This sequence belongs to the universal ribosomal protein uS12 family. Part of the 30S ribosomal subunit. Contacts proteins S8 and S17. May interact with IF1 in the 30S initiation complex.

Its function is as follows. With S4 and S5 plays an important role in translational accuracy. Functionally, interacts with and stabilizes bases of the 16S rRNA that are involved in tRNA selection in the A site and with the mRNA backbone. Located at the interface of the 30S and 50S subunits, it traverses the body of the 30S subunit contacting proteins on the other side and probably holding the rRNA structure together. The combined cluster of proteins S8, S12 and S17 appears to hold together the shoulder and platform of the 30S subunit. This is Small ribosomal subunit protein uS12 from Prochlorococcus marinus (strain SARG / CCMP1375 / SS120).